We begin with the raw amino-acid sequence, 200 residues long: Holliday junction branch migration complex subunit RuvA (200 aa).

A domain I region spans residues 1-63; it reads MIAFVRGQVA…EDSLTLFGFA (63 aa). Residues 64–142 form a domain II region; sequence DEDEKQTFEL…APTGAGRSAG (79 aa). The interval 142 to 146 is flexible linker; that stretch reads GVPAP. The domain III stretch occupies residues 147-200; it reads AGAVWRDQVHQGLVGLGWPVRDAEKAVAAVAPEAGDVPDVAALLRAALRTLSKA.

This sequence belongs to the RuvA family. Homotetramer. Forms an RuvA(8)-RuvB(12)-Holliday junction (HJ) complex. HJ DNA is sandwiched between 2 RuvA tetramers; dsDNA enters through RuvA and exits via RuvB. An RuvB hexamer assembles on each DNA strand where it exits the tetramer. Each RuvB hexamer is contacted by two RuvA subunits (via domain III) on 2 adjacent RuvB subunits; this complex drives branch migration. In the full resolvosome a probable DNA-RuvA(4)-RuvB(12)-RuvC(2) complex forms which resolves the HJ.

Its subcellular location is the cytoplasm. Its function is as follows. The RuvA-RuvB-RuvC complex processes Holliday junction (HJ) DNA during genetic recombination and DNA repair, while the RuvA-RuvB complex plays an important role in the rescue of blocked DNA replication forks via replication fork reversal (RFR). RuvA specifically binds to HJ cruciform DNA, conferring on it an open structure. The RuvB hexamer acts as an ATP-dependent pump, pulling dsDNA into and through the RuvAB complex. HJ branch migration allows RuvC to scan DNA until it finds its consensus sequence, where it cleaves and resolves the cruciform DNA. This is Holliday junction branch migration complex subunit RuvA from Nocardioides sp. (strain ATCC BAA-499 / JS614).